The sequence spans 518 residues: Kelch repeat and BTB domain-containing protein 4 (518 aa).

Positions 45–112 (ADVTISVEGR…IYHGTVKLRA (68 aa)) constitute a BTB domain. In terms of domain architecture, BACK spans 147–239 (CLQVMWLADR…SLKEIGENVH (93 aa)). Kelch repeat units follow at residues 239-285 (HIYL…KHGG), 286-328 (DLYV…SVPG), 331-378 (AIYS…NLNG), 380-430 (IYLL…VHKD), and 432-481 (VFIV…VFRD).

Component of the BCR(KBTBD4) E3 ubiquitin ligase complex, at least composed of CUL3, KBTBD4 and RBX1.

In terms of biological role, substrate-specific adapter of a BCR (BTB-CUL3-RBX1) E3 ubiquitin ligase complex which targets CoREST corepressor complex components RCOR1, KDM1A/LSD1 and HDAC2 for proteasomal degradation. RCOR1 is likely to be the primary target while degradation of KDM1A and HDAC2 is likely due to their association with RCOR1. Also targets RCOR3, MIER2 and MIER3 for proteasomal degradation as well as associated proteins ZNF217 and RREB1. Degradation is dependent on the presence of an ELM2 domain in the target proteins. In Pongo abelii (Sumatran orangutan), this protein is Kelch repeat and BTB domain-containing protein 4 (KBTBD4).